We begin with the raw amino-acid sequence, 110 residues long: UPF0060 membrane protein Bcep18194_A4425 (110 aa).

4 consecutive transmembrane segments (helical) span residues 9–29, 34–54, 66–86, and 88–108; these read ALFA…WLVL, PVWL…LLTL, YGGV…GVAL, and RWDV…ALQP.

It belongs to the UPF0060 family.

It is found in the cell inner membrane. This Burkholderia lata (strain ATCC 17760 / DSM 23089 / LMG 22485 / NCIMB 9086 / R18194 / 383) protein is UPF0060 membrane protein Bcep18194_A4425.